Reading from the N-terminus, the 568-residue chain is Dihydroxy-acid dehydratase (568 aa).

Residue Cys59 coordinates [2Fe-2S] cluster. Residue Asp91 coordinates Mg(2+). Cys132 lines the [2Fe-2S] cluster pocket. Mg(2+) contacts are provided by Asp133 and Lys134. Lys134 carries the post-translational modification N6-carboxylysine. Residue Cys204 coordinates [2Fe-2S] cluster. Glu456 provides a ligand contact to Mg(2+). Ser482 serves as the catalytic Proton acceptor.

The protein belongs to the IlvD/Edd family. In terms of assembly, homodimer. [2Fe-2S] cluster is required as a cofactor. It depends on Mg(2+) as a cofactor.

It carries out the reaction (2R)-2,3-dihydroxy-3-methylbutanoate = 3-methyl-2-oxobutanoate + H2O. The enzyme catalyses (2R,3R)-2,3-dihydroxy-3-methylpentanoate = (S)-3-methyl-2-oxopentanoate + H2O. The protein operates within amino-acid biosynthesis; L-isoleucine biosynthesis; L-isoleucine from 2-oxobutanoate: step 3/4. It participates in amino-acid biosynthesis; L-valine biosynthesis; L-valine from pyruvate: step 3/4. Its function is as follows. Functions in the biosynthesis of branched-chain amino acids. Catalyzes the dehydration of (2R,3R)-2,3-dihydroxy-3-methylpentanoate (2,3-dihydroxy-3-methylvalerate) into 2-oxo-3-methylpentanoate (2-oxo-3-methylvalerate) and of (2R)-2,3-dihydroxy-3-methylbutanoate (2,3-dihydroxyisovalerate) into 2-oxo-3-methylbutanoate (2-oxoisovalerate), the penultimate precursor to L-isoleucine and L-valine, respectively. In Verminephrobacter eiseniae (strain EF01-2), this protein is Dihydroxy-acid dehydratase.